We begin with the raw amino-acid sequence, 1274 residues long: DENN domain-containing protein 5B (1274 aa).

At Ser2 the chain carries N-acetylserine. In terms of domain architecture, uDENN spans 39-244 (DELAGENFDQ…EVPLPPPGRS (206 aa)). 2 positions are modified to phosphoserine: Ser49 and Ser178. Residues 263 to 399 (ELPLSDYPLR…VDFIQELSEV (137 aa)) enclose the cDENN domain. Positions 401–581 (VQFGIPPEGS…DNKIMSQWEE (181 aa)) constitute a dDENN domain. The 161-residue stretch at 772–932 (LEENTLIASL…DYFCFTSVFT (161 aa)) folds into the RUN 1 domain. A Phosphoserine modification is found at Ser822. Residues 916 to 936 (LLSLNAVDYFCFTSVFTTIMI) form a helical membrane-spanning segment. Residues 936-1044 (IPYRSVIIPI…DDGSLERILI (109 aa)) form the PLAT domain. A Phosphothreonine modification is found at Thr1062. 3 positions are modified to phosphoserine: Ser1068, Ser1076, and Ser1079. One can recognise an RUN 2 domain in the interval 1118 to 1267 (TVLLCGENGL…QDFTIVLEGS (150 aa)).

This sequence belongs to the RAB6IP1 family.

The protein resides in the membrane. Guanine nucleotide exchange factor (GEF) which may activate RAB39A and/or RAB39B. Promotes the exchange of GDP to GTP, converting inactive GDP-bound Rab proteins into their active GTP-bound form. The protein is DENN domain-containing protein 5B (DENND5B) of Homo sapiens (Human).